We begin with the raw amino-acid sequence, 493 residues long: Dipeptide permease D (493 aa).

13 helical membrane-spanning segments follow: residues 14 to 34 (VVALQIWEYFSFYGMRALLIL), 49 to 69 (ELFSAYCSLVYVTPILGGYLA), 91 to 111 (LVLGASEIAPTFLYLSLAIIV), 138 to 158 (GGFSLLYAAGNIGSIVAPIAC), 167 to 187 (WAMGFALAAIGMLAGLVIFLC), 212 to 232 (NWGWLLILLVAAPLLITVLFW), 235 to 255 (WSVYALIVATAIGLVVLAKIY), 267 to 287 (LGLIVTLTLFSMLFWAFAQQG), 312 to 332 (MFQSVNAFAVMLCGVVLAWLV), 344 to 364 (IWGKFALGLGLMSAGFCILTL), 379 to 399 (LMVLGLAVMGFAELFIDPVAM), 413 to 433 (VLTGIYMLLSGAIANYLAGVI), and 458 to 478 (VFEQITWGALACVGVVLLIWL).

Belongs to the major facilitator superfamily. Proton-dependent oligopeptide transporter (POT/PTR) (TC 2.A.17) family. DtpD subfamily.

It localises to the cell inner membrane. Its function is as follows. Probable proton-dependent permease that transports dipeptides. This chain is Dipeptide permease D, found in Salmonella typhimurium (strain 14028s / SGSC 2262).